An 81-amino-acid chain; its full sequence is Photosystem I iron-sulfur center (81 aa).

4Fe-4S ferredoxin-type domains follow at residues 1-31 (MSHK…MVPW) and 39-68 (IASS…IRVY). [4Fe-4S] cluster-binding residues include cysteine 11, cysteine 14, cysteine 17, cysteine 21, cysteine 48, cysteine 51, cysteine 54, and cysteine 58.

As to quaternary structure, the cyanobacterial PSI reaction center is composed of one copy each of PsaA,B,C,D,E,F,I,J,K,L,M and X, and forms trimeric complexes. [4Fe-4S] cluster serves as cofactor.

Its subcellular location is the cellular thylakoid membrane. The catalysed reaction is reduced [plastocyanin] + hnu + oxidized [2Fe-2S]-[ferredoxin] = oxidized [plastocyanin] + reduced [2Fe-2S]-[ferredoxin]. Apoprotein for the two 4Fe-4S centers FA and FB of photosystem I (PSI); essential for photochemical activity. FB is the terminal electron acceptor of PSI, donating electrons to ferredoxin. The C-terminus interacts with PsaA/B/D and helps assemble the protein into the PSI complex. Required for binding of PsaD and PsaE to PSI. PSI is a plastocyanin/cytochrome c6-ferredoxin oxidoreductase, converting photonic excitation into a charge separation, which transfers an electron from the donor P700 chlorophyll pair to the spectroscopically characterized acceptors A0, A1, FX, FA and FB in turn. This is Photosystem I iron-sulfur center from Crocosphaera subtropica (strain ATCC 51142 / BH68) (Cyanothece sp. (strain ATCC 51142)).